The sequence spans 555 residues: Undecaprenyl phosphate-alpha-4-amino-4-deoxy-L-arabinose arabinosyl transferase (555 aa).

The next 11 membrane-spanning stretches (helical) occupy residues 6–26 (GSWA…PLNG), 87–107 (FGSV…AMLM), 116–136 (LATL…YSVL), 178–198 (FMTK…PIVI), 206–226 (LLIY…PWAL), 257–277 (APFW…LALL), 293–313 (ELFF…IAKG), 315–335 (LPTY…AYAE), 351–371 (VLNG…GSGL), 384–404 (PKIV…VVSV), and 411–431 (WSWA…AIPQ).

The protein belongs to the glycosyltransferase 83 family.

Its subcellular location is the cell inner membrane. The catalysed reaction is 4-amino-4-deoxy-alpha-L-arabinopyranosyl di-trans,octa-cis-undecaprenyl phosphate + lipid IVA = lipid IIA + di-trans,octa-cis-undecaprenyl phosphate.. It participates in lipopolysaccharide metabolism; 4-amino-4-deoxy-beta-L-arabinose-lipid A biosynthesis. In terms of biological role, catalyzes the transfer of the L-Ara4N moiety of the glycolipid undecaprenyl phosphate-alpha-L-Ara4N to lipid A. The modified arabinose is attached to lipid A and is required for resistance to polymyxin and cationic antimicrobial peptides. This chain is Undecaprenyl phosphate-alpha-4-amino-4-deoxy-L-arabinose arabinosyl transferase, found in Serratia proteamaculans (strain 568).